A 542-amino-acid chain; its full sequence is Putative selenium-binding protein (542 aa).

This sequence belongs to the selenium-binding protein family.

This Caenorhabditis elegans protein is Putative selenium-binding protein.